Reading from the N-terminus, the 798-residue chain is Bromodomain-containing protein 2 (798 aa).

Met-1 is subject to N-acetylmethionine. Residues 1–21 (MLQNVTPHKLPGEGNAGLLGL) are disordered. The residue at position 6 (Thr-6) is a Phosphothreonine. Ser-36 carries the post-translational modification Phosphoserine. The disordered stretch occupies residues 53–72 (LQLAPANPPPPEVSNPKKPG). Positions 73–179 (RVTNQLQYLH…KIFLQKVASM (107 aa)) constitute a Bromo 1 domain. Residues Asp-111, Tyr-154, Asn-155, Lys-156, Asp-159, and Asp-160 each coordinate a protein. 3 disordered regions span residues 267-348 (PPAQ…LSEQ), 455-648 (EPLE…KRQL), and 735-798 (EKRL…SDSG). The span at 284-297 (TTTPTPTAILAPGS) shows a compositional bias: low complexity. Phosphoserine occurs at positions 297, 300, and 304. Residues 315 to 331 (MRRESGRPIKPPRKDLP) show a composition bias toward basic and acidic residues. The region spanning 343 to 452 (GKLSEQLKHC…DVFEFRYAKM (110 aa)) is the Bromo 2 domain. Residues 480 to 512 (SSEESSSESSSEEEEEEDEEDEEEESESSDSEE) show a composition bias toward acidic residues. Residues 542 to 564 (KPKRKREKKEKKKKRKAEKHRGR) are compositionally biased toward basic residues. The short motif at 553–557 (KKKRK) is the Nuclear localization signal element. The NET domain maps to 630-712 (DSEEEEESRP…SCLRKKPRKP (83 aa)). Ser-631 is subject to Phosphoserine. The span at 637 to 648 (SRPMSYDEKRQL) shows a compositional bias: basic and acidic residues. Residues 772 to 792 (SASSSSSDSSSSSSSSSSSDT) show a composition bias toward low complexity.

This sequence belongs to the BET family. As to quaternary structure, homodimer. Interacts with E2F1. Interacts with (acetylated) STAT3; promoting STAT3 recruitment to chromatin. Interacts with CTCF; promoting BRD2 recruitment to chromatin.

It localises to the nucleus. It is found in the chromosome. Chromatin reader protein that specifically recognizes and binds histone H4 acetylated at 'Lys-5' and 'Lys-12' (H4K5ac and H4K12ac, respectively), thereby controlling gene expression and remodeling chromatin structures. Recruits transcription factors and coactivators to target gene sites, and activates RNA polymerase II machinery for transcriptional elongation. Plays a key role in genome compartmentalization via its association with CTCF and cohesin: recruited to chromatin by CTCF and promotes formation of topologically associating domains (TADs) via its ability to bind acetylated histones, contributing to CTCF boundary formation and enhancer insulation. Also recognizes and binds acetylated non-histone proteins, such as STAT3. Involved in inflammatory response by regulating differentiation of naive CD4(+) T-cells into T-helper Th17: recognizes and binds STAT3 acetylated at 'Lys-87', promoting STAT3 recruitment to chromatin. In addition to acetylated lysines, also recognizes and binds lysine residues on histones that are both methylated and acetylated on the same side chain to form N6-acetyl-N6-methyllysine (Kacme), an epigenetic mark of active chromatin associated with increased transcriptional initiation. Specifically binds histone H4 acetyl-methylated at 'Lys-5' and 'Lys-12' (H4K5acme and H4K12acme, respectively). This Rattus norvegicus (Rat) protein is Bromodomain-containing protein 2 (Brd2).